The sequence spans 227 residues: Putative molybdenum transport system permease protein YvgM (227 aa).

Helical transmembrane passes span 17 to 37 (VVLS…LGTL), 57 to 77 (FMLP…VIFG), 94 to 114 (VIFT…PLMY), 142 to 162 (VFIH…SILS), and 201 to 221 (TLAW…LFFI). In terms of domain architecture, ABC transmembrane type-1 spans 17–221 (VVLSFQVAAV…VISFLMLFFI (205 aa)).

This sequence belongs to the binding-protein-dependent transport system permease family. CysTW subfamily.

The protein localises to the cell membrane. Could be part of the binding-protein-dependent transport system for molybdenum; probably responsible for the translocation of the substrate across the membrane. This chain is Putative molybdenum transport system permease protein YvgM (yvgM), found in Bacillus subtilis (strain 168).